The chain runs to 463 residues: L-seryl-tRNA(Sec) selenium transferase (463 aa).

Position 295 is an N6-(pyridoxal phosphate)lysine (Lys-295).

This sequence belongs to the SelA family. As to quaternary structure, homodecamer; pentamer of dimers. Binds only one seryl-tRNA(Sec) per dimer. The cofactor is pyridoxal 5'-phosphate.

The protein resides in the cytoplasm. It carries out the reaction L-seryl-tRNA(Sec) + selenophosphate + H(+) = L-selenocysteinyl-tRNA(Sec) + phosphate. Its pathway is aminoacyl-tRNA biosynthesis; selenocysteinyl-tRNA(Sec) biosynthesis; selenocysteinyl-tRNA(Sec) from L-seryl-tRNA(Sec) (bacterial route): step 1/1. Its function is as follows. Converts seryl-tRNA(Sec) to selenocysteinyl-tRNA(Sec) required for selenoprotein biosynthesis. This is L-seryl-tRNA(Sec) selenium transferase from Photorhabdus laumondii subsp. laumondii (strain DSM 15139 / CIP 105565 / TT01) (Photorhabdus luminescens subsp. laumondii).